The chain runs to 571 residues: Penton protein (571 aa).

The segment at 298–324 is disordered; sequence DDTEQGGDGAGGGNNSGSGAEENSNAA. Gly residues predominate over residues 303–313; that stretch reads GGDGAGGGNNS. Low complexity predominate over residues 314-324; it reads GSGAEENSNAA. A Cell attachment site motif is present at residues 340 to 342; sequence RGD. The segment at 347-383 is disordered; the sequence is RAEEKRAEAEAAAEAAAPAAQPEVEKPQKKPVIKPLT. A compositionally biased stretch (low complexity) spans 356 to 368; sequence EAAAEAAAPAAQP. Ser455 bears the Phosphoserine; by host mark.

It belongs to the adenoviridae penton family. Interacts with the fiber protein (via N-terminal tail region). Interacts with the capsid vertex protein; this interaction binds the penton base to neighboring peripentonal hexons. Interacts (via the cell attachment site RGD) with host heterodimer ITGAV-ITGB5; this interaction promotes virus internalization. Interacts with host WWP1 and WWP2.

The protein resides in the virion. It localises to the host nucleus. Functionally, major capsid protein that self-associates to form penton base pentamers, each in the shape of a pentagon, situated at the 12 vertices of the pseudo T=25 capsid. Involved in virus secondary attachment to host cell after initial attachment by the fiber protein. Binds host integrin heterodimer ITGAV-ITGB5 (alphaV-beta5) thereby triggering clathrin-mediated endocytosis of virions. Mediates initial virus attachment to CXADR-negative cells. Binding to integrins ITGAV-ITGB5 also seems to induce macropinocytosis uptake of the virus. As the virus enters the host cell, penton proteins are shed concomitant with virion acidification in the endosome. The protein is Penton protein of Homo sapiens (Human).